The chain runs to 356 residues: S-adenosylmethionine:tRNA ribosyltransferase-isomerase (356 aa).

It belongs to the QueA family. Monomer.

Its subcellular location is the cytoplasm. It catalyses the reaction 7-aminomethyl-7-carbaguanosine(34) in tRNA + S-adenosyl-L-methionine = epoxyqueuosine(34) in tRNA + adenine + L-methionine + 2 H(+). The protein operates within tRNA modification; tRNA-queuosine biosynthesis. Functionally, transfers and isomerizes the ribose moiety from AdoMet to the 7-aminomethyl group of 7-deazaguanine (preQ1-tRNA) to give epoxyqueuosine (oQ-tRNA). The chain is S-adenosylmethionine:tRNA ribosyltransferase-isomerase from Escherichia coli (strain 55989 / EAEC).